The chain runs to 387 residues: Eukaryotic translation initiation factor 3 subunit M (387 aa).

One can recognise a PCI domain in the interval 181–340; that stretch reads LSSKVMIELL…RKVHISSTMH (160 aa).

The protein belongs to the eIF-3 subunit M family. Component of the eukaryotic translation initiation factor 3 (eIF-3) complex. The eIF-3 complex interacts with pix.

The protein localises to the cytoplasm. The protein resides in the golgi apparatus. Functionally, component of the eukaryotic translation initiation factor 3 (eIF-3) complex, which is involved in protein synthesis of a specialized repertoire of mRNAs and, together with other initiation factors, stimulates binding of mRNA and methionyl-tRNAi to the 40S ribosome. The eIF-3 complex specifically targets and initiates translation of a subset of mRNAs involved in cell proliferation. This is Eukaryotic translation initiation factor 3 subunit M from Drosophila pseudoobscura pseudoobscura (Fruit fly).